The sequence spans 930 residues: Protocadherin gamma-B6 (930 aa).

The signal sequence occupies residues 1–30 (MGGSCAQRRRAGPRQVLFPLLLPLFYPTLS). Cadherin domains follow at residues 31-133 (EPIR…APQF), 134-242 (DKKE…PPVF), 243-347 (SRDE…SPEI), 348-452 (IITS…APVF), 453-562 (DQTS…APRV), and 570-675 (DGSA…LPDL). Residues 31-691 (EPIRYSIPEE…SDPQAELQFY (661 aa)) are Extracellular-facing. 3 N-linked (GlcNAc...) asparagine glycosylation sites follow: Asn304, Asn419, and Asn545. Residues 692–712 (LVVALALISVLFLLAVILAIA) form a helical membrane-spanning segment. Residues 713-930 (LRLRRSLSPA…KKKSGKKEKK (218 aa)) lie on the Cytoplasmic side of the membrane. 2 disordered regions span residues 791–839 (PHGG…WPNN) and 900–930 (ATLTNAAGKRDGKAPAGGNGNKKKSGKKEKK). Polar residues predominate over residues 800–839 (HPETLTSQAPPNTDWRFSQAQRPGTSGSQNGDDTGTWPNN). Basic residues predominate over residues 920-930 (NKKKSGKKEKK).

It is found in the cell membrane. Its function is as follows. Potential calcium-dependent cell-adhesion protein. May be involved in the establishment and maintenance of specific neuronal connections in the brain. This chain is Protocadherin gamma-B6 (PCDHGB6), found in Homo sapiens (Human).